Reading from the N-terminus, the 561-residue chain is Cytochrome P450 monooxygenase iboC (561 aa).

Residues 8 to 28 (RFYYQLLAAVLIPALFVAWAA) form a helical membrane-spanning segment. Residue C484 coordinates heme.

Belongs to the cytochrome P450 family. The cofactor is heme.

Its subcellular location is the membrane. Its pathway is secondary metabolite biosynthesis. Functionally, cytochrome P450 monooxygenase; part of the gene cluster that mediates the biosynthesis of the psychoactive metabolites ibotenic acid and muscimol. The first committed step is glutamate hydroxylation by the 2-oxoglutarate-dependent dioxygenase iboH, and the last step is decarboxylation of ibotenic acid to muscimol by the decarboxylase iboD. The order of the intermediate reactions is somewhat ambiguous. IboA likely activates the carboxylic acid at position 5 to introduce an amide bond, and the flavin monooxygenase iboF generates the N-O bond. There are several options for the latter step. One option is that iboF directly hydroxylates the amide nitrogen formed by iboA to produce a hydroxamic acid species. Another option is that iboF hydroxylates an external N-containing compound, whose resulting N-O bond is subsequently introduced into the hydroxyglutamate scaffold. The paralogous PLP-dependent cystathionine gamma-synthase-like enzymes iboG1 and iboG2 are likely involved in substitution of the OH group at position 3 by the O-N moiety. The first cyclic intermediate is most probably tricholomic acid which is likely desaturated to ibotenic acid by the cytochrome P450 monooxygenase iboC. This chain is Cytochrome P450 monooxygenase iboC, found in Amanita muscaria (strain Koide BX008).